A 308-amino-acid chain; its full sequence is Mu-like prophage FluMu major head subunit (308 aa).

The protein to phage Mu protein T.

This chain is Mu-like prophage FluMu major head subunit, found in Haemophilus influenzae (strain ATCC 51907 / DSM 11121 / KW20 / Rd).